The sequence spans 753 residues: Inactive protein-tyrosine phosphatase egg-4 (753 aa).

Disordered stretches follow at residues 26–46 (TSLQSFCSGNTDDSSADSTDN) and 75–145 (SFRK…SGHG). A compositionally biased stretch (low complexity) spans 35 to 46 (NTDDSSADSTDN). 2 stretches are compositionally biased toward basic and acidic residues: residues 84 to 94 (AQKDRRSKERL) and 129 to 145 (VSEKPKDEGRREDSGHG). The 254-residue stretch at 408–661 (MERRFEILEN…IFVHRLVAFF (254 aa)) folds into the Tyrosine-protein phosphatase domain.

The protein belongs to the protein-tyrosine phosphatase family. In terms of assembly, part of a complex, consisting of pseudophosphatases egg-3, egg-4, egg-5 and kinase mbk-2; this complex is required for the oocyte-to-zygote transition. Interacts (via tyrosine-protein phosphatase domain) with kinase mbk-2 (via 'Tyr-619' and 'Tyr-621'); mbk-2 tyrosine phosphorylation enhances the interaction. The interaction inhibits mbk-2 kinase activity and is required for mbk-2 oocyte cortex localization. Interacts with egg-3.

The protein resides in the cytoplasm. Its subcellular location is the cell cortex. Its function is as follows. Inactive phosphatase which acts redundantly with egg-5 in the oocyte-to-zygote transition. Required for the polarization of cortical actin cytoskeleton rearrangement in the oocyte before and after fertilization. Together with egg-5, required for the cortical localization of kinase mbk-2 and for the inhibition of mbk-2 kinase activity in maturing oocyte until the end of meiosis I. Also required for kinase mbk-2, pseudophosphatase egg-3 and chitin synthase chs-1 localization to cytoplasmic foci after fertilization. The polypeptide is Inactive protein-tyrosine phosphatase egg-4 (Caenorhabditis elegans).